The following is a 189-amino-acid chain: HGPRTase-like protein (189 aa).

It belongs to the purine/pyrimidine phosphoribosyltransferase family. Archaeal HPRT subfamily.

In terms of biological role, may catalyze a purine salvage reaction, the substrate is unknown. The chain is HGPRTase-like protein from Natronomonas pharaonis (strain ATCC 35678 / DSM 2160 / CIP 103997 / JCM 8858 / NBRC 14720 / NCIMB 2260 / Gabara) (Halobacterium pharaonis).